The chain runs to 173 residues: Streptothricin acetyltransferase A (173 aa).

One can recognise an N-acetyltransferase domain in the interval 21-173 (VVFGRMIPAF…EIAIFWYYKF (153 aa)).

It belongs to the acetyltransferase family. GNAT subfamily. Homodimer.

It carries out the reaction streptothricin D + acetyl-CoA = N(beta)-acetylstreptothricin D + CoA + H(+). It catalyses the reaction streptothricin F + acetyl-CoA = N(beta)-acetylstreptothricin F + CoA + H(+). In terms of biological role, involved in resistance to streptothricin, a broad-spectrum antibiotic produced by streptomycetes. Detoxifies streptothricin via acetylation of the beta amino group of the first beta-lysyl moiety of streptothricin. The sequence is that of Streptothricin acetyltransferase A from Bacillus subtilis (strain 168).